A 233-amino-acid polypeptide reads, in one-letter code: ATP synthase subunit a 2 (233 aa).

The next 5 helical transmembrane spans lie at 15-35 (FVVINATLVYTWLTMALLVIG), 78-98 (YLAFVGTLFLFILTANLLTVV), 107-127 (SLSTTTALAIAVFIAVPIYGI), 169-189 (IMSGNLLAAILLALVPLFVPV), and 194-214 (LGLVFGVIQAYVFAILALVYI).

This sequence belongs to the ATPase A chain family. In terms of assembly, F-type ATPases have 2 components, CF(1) - the catalytic core - and CF(0) - the membrane proton channel. CF(1) has five subunits: alpha(3), beta(3), gamma(1), delta(1), epsilon(1). CF(0) has four main subunits: a, b, b' and c.

The protein localises to the cellular thylakoid membrane. Its function is as follows. Key component of the proton channel; it plays a direct role in the translocation of protons across the membrane. In Picosynechococcus sp. (strain ATCC 27264 / PCC 7002 / PR-6) (Agmenellum quadruplicatum), this protein is ATP synthase subunit a 2.